The primary structure comprises 222 residues: Small ribosomal subunit protein uS3 (222 aa).

A KH type-2 domain is found at 39–108; that stretch reads IRKFIKKELF…NVLINIVEVK (70 aa).

It belongs to the universal ribosomal protein uS3 family. In terms of assembly, part of the 30S ribosomal subunit. Forms a tight complex with proteins S10 and S14.

Binds the lower part of the 30S subunit head. Binds mRNA in the 70S ribosome, positioning it for translation. The protein is Small ribosomal subunit protein uS3 of Clostridium perfringens (strain ATCC 13124 / DSM 756 / JCM 1290 / NCIMB 6125 / NCTC 8237 / Type A).